Reading from the N-terminus, the 705-residue chain is Forkhead box protein P1 (705 aa).

Residues 1–19 (MMQESGSETKSNGSAIQNG) are compositionally biased toward polar residues. The disordered stretch occupies residues 1–41 (MMQESGSETKSNGSAIQNGSSGGNHLLECGALRDTRSNGEA). S113 carries the phosphoserine modification. Disordered stretches follow at residues 267–286 (HTAEETTSSNHSSLDLTSTC) and 291–326 (APSKSSLIMNPHASTNGQLSVHTPKRESLSHEEHPH). Polar residues-rich tracts occupy residues 276-286 (NHSSLDLTSTC) and 291-311 (APSKSSLIMNPHASTNGQLSV). Residues 314–326 (PKRESLSHEEHPH) show a composition bias toward basic and acidic residues. K315 participates in a covalent cross-link: Glycyl lysine isopeptide (Lys-Gly) (interchain with G-Cter in SUMO2). Residues 334 to 359 (GVCKWPGCEAVCDDFPAFLKHLNSEH) form a C2H2-type zinc finger. Residues 376-397 (VQQLELQLAKDKERLQAMMTHL) are leucine-zipper. Glycyl lysine isopeptide (Lys-Gly) (interchain with G-Cter in SUMO2) cross-links involve residues K400 and K405. The segment at 410 to 414 (PLNLV) is CTBP1-binding. A compositionally biased stretch (polar residues) spans 418–431 (TLSKSASEASPQSL). Positions 418–450 (TLSKSASEASPQSLPHTPTTPTAPLTPVTQGPS) are disordered. A compositionally biased stretch (low complexity) spans 432 to 446 (PHTPTTPTAPLTPVT). A Glycyl lysine isopeptide (Lys-Gly) (interchain with G-Cter in SUMO2) cross-link involves residue K470. A DNA-binding region (fork-head) is located at residues 493–583 (RPPFTYASLI…PQKISGNPSL (91 aa)). The disordered stretch occupies residues 639–705 (EHTNSNESDS…EDEPVNEDME (67 aa)). Over residues 640-651 (HTNSNESDSSPG) the composition is skewed to polar residues. T681 carries the phosphothreonine modification. S686 carries the post-translational modification Phosphoserine. The segment covering 695 to 705 (YEDEPVNEDME) has biased composition (acidic residues).

As to quaternary structure, forms homodimers and heterodimers with FOXP2 and FOXP4. Dimerization is required for DNA-binding. Self-associates. Interacts with CTBP1. Interacts with NCOR2 and AR. Interacts with FOXP2. Interacts with TBR1. Interacts with AURKA; this interaction facilitates the phosphorylation of FOXP1, which suppresses the expression of FBXL7. Interacts with ZMYM2. In terms of tissue distribution, isoform 5 is specifically expressed in embryonic stem cells. Highest expression in the lung, brain, and spleen. Lower expression in heart, skeletal muscle, kidney, small intestine (isoform 3 not present) and liver.

It is found in the nucleus. Functionally, transcriptional repressor. Can act with CTBP1 to synergistically repress transcription but CTPBP1 is not essential. Plays an important role in the specification and differentiation of lung epithelium. Acts cooperatively with FOXP4 to regulate lung secretory epithelial cell fate and regeneration by restricting the goblet cell lineage program; the function may involve regulation of AGR2. Essential transcriptional regulator of B-cell development. Involved in regulation of cardiac muscle cell proliferation. Involved in the columnar organization of spinal motor neurons. Promotes the formation of the lateral motor neuron column (LMC) and the preganglionic motor column (PGC) and is required for respective appropriate motor axon projections. The segment-appropriate generation of spinal cord motor columns requires cooperation with other Hox proteins. Can regulate PITX3 promoter activity; may promote midbrain identity in embryonic stem cell-derived dopamine neurons by regulating PITX3. Negatively regulates the differentiation of T follicular helper cells T(FH)s. Involved in maintenance of hair follicle stem cell quiescence; the function probably involves regulation of FGF18. Represses transcription of various pro-apoptotic genes and cooperates with NF-kappa B-signaling in promoting B-cell expansion by inhibition of caspase-dependent apoptosis. Binds to CSF1R promoter elements and is involved in regulation of monocyte differentiation and macrophage functions; repression of CSF1R in monocytes seems to involve NCOR2 as corepressor. Involved in endothelial cell proliferation, tube formation and migration indicative for a role in angiogenesis; the role in neovascularization seems to implicate suppression of SEMA5B. Can negatively regulate androgen receptor signaling. Acts as a transcriptional activator of the FBXL7 promoter; this activity is regulated by AURKA. Its function is as follows. Involved in transcriptional regulation in embryonic stem cells (ESCs). Stimulates expression of transcription factors that are required for pluripotency and decreases expression of differentiation-associated genes. Has distinct DNA-binding specifities as compared to the canonical form and preferentially binds DNA with the sequence 5'-CGATACAA-3' (or closely related sequences). Promotes ESC self-renewal and pluripotency. In Mus musculus (Mouse), this protein is Forkhead box protein P1 (Foxp1).